A 257-amino-acid chain; its full sequence is Snake venom serine protease KN9 (257 aa).

The first 18 residues, 1 to 18, serve as a signal peptide directing secretion; it reads MVLIRVLANLLILQLSYA. The propeptide occupies 19-24; sequence QKSSEL. One can recognise a Peptidase S1 domain in the interval 25–248; it reads VVGGDECNIN…HLDWIKSIIA (224 aa). Intrachain disulfides connect C31/C162, C49/C65, C141/C209, C173/C188, and C199/C224. Residue H64 is the Charge relay system of the active site. N-linked (GlcNAc...) asparagine glycosylation occurs at N102. The active-site Charge relay system is the D109. N-linked (GlcNAc...) asparagine glycosylation is found at N120 and N121. Catalysis depends on S203, which acts as the Charge relay system.

This sequence belongs to the peptidase S1 family. Snake venom subfamily. Monomer. In terms of tissue distribution, expressed by the venom gland.

The protein localises to the secreted. In terms of biological role, snake venom serine protease that may act in the hemostasis system of the prey. This Trimeresurus stejnegeri (Chinese green tree viper) protein is Snake venom serine protease KN9.